The sequence spans 85 residues: uncharacterized protein (85 aa).

Positions 1–85 (MRWRPSSWSA…DQEQCGQHCR (85 aa)) are disordered. The segment covering 47 to 61 (ASVEGEGGRHADRHG) has biased composition (basic and acidic residues).

This is an uncharacterized protein from Streptomyces lividans.